Reading from the N-terminus, the 220-residue chain is Exodeoxyribonuclease 10 (220 aa).

Mg(2+) is required as a cofactor.

In terms of biological role, capable of degrading both single-strand and double-strand DNA with 3' to 5' polarity. Has higher affinity for ssDNA ends than for dsDNA. The polypeptide is Exodeoxyribonuclease 10 (exoX) (Escherichia coli O6:H1 (strain CFT073 / ATCC 700928 / UPEC)).